The chain runs to 734 residues: Transcription factor EMB1444 (734 aa).

Residues 537–566 are disordered; the sequence is QFPTSLEIPKKNKKRAKPGESSRPRPRDRQ. Positions 548 to 555 match the Nuclear localization signal motif; that stretch reads NKKRAKPG. The 50-residue stretch at 552-601 folds into the bHLH domain; the sequence is AKPGESSRPRPRDRQLIQDRIKELRELVPNGSKCSIDSLLECTIKHMLFL. Residues 553-566 show a composition bias toward basic and acidic residues; sequence KPGESSRPRPRDRQ.

It belongs to the bHLH protein family. LHW subfamily. As to quaternary structure, homodimer.

It is found in the nucleus. Transcription factor that may regulate root development. The polypeptide is Transcription factor EMB1444 (Arabidopsis thaliana (Mouse-ear cress)).